The primary structure comprises 439 residues: MKITVHSSKAVKPEYGACGLAPGCTADVVPLTVLDKANFDTYISVIYAFHAPAPPNAVLEAGLGRALVDYREWAGRLGVDASGGRAILLNDAGARFVEATADVALDSVMPLKPTSEVLSLHPSGDDGPEELMLIQVTRFACGSLVVGFTTQHIVSDGRSTGNFFVAWSQATRGAAIDPVPVHDRASFFHPREPLHVEYEHRGVEFKPCEKAHDVVCGADGDEDEVVVNKVHFSREFISKLKAHASAGAPRPCSTLQCVVAHLWRSMTMARGLDGGETTSVAIAVDGRARMSPQVPDGYTGNVILWARPTTTAGELVTRPVKHAVELISREVARINDGYFKSFIDFANSGAVEKERLVATADAADMVLSPNIEVDSWLRIPFYDMDFGGGRPFFFMPSYLPVEGLLILLPSFLGDGSVDAYVPLFSRDMNTFKNCCYSLD.

Catalysis depends on proton acceptor residues histidine 152 and aspartate 385.

The protein belongs to the plant acyltransferase family. As to quaternary structure, monomer.

It carries out the reaction 4-coumaroyl-CoA + agmatine = N-(4-guanidinobutyl)-4-hydroxycinnamamide + CoA + H(+). With respect to regulation, inhibited by DEPC. Completely inhibited by ZnSO(4), strongly inhibited by CuSO(4), partially inhibited by MnCl(2). Unaffected by MgCl(2) or CaCl(2). Its function is as follows. Involved in the synthesis of hordatines (antifungal hydroxycinnamoylagmatine derivatives). Specific for agmatine as the acyl acceptor, inactive towards tyramine and putrescine. Has activity with the acyl donors 4-coumaroyl-CoA, cinnamoyl-CoA, caffeoyl-CoA, feruloyl-CoA, and to a lesser extent sinapoyl-CoA. This is Agmatine coumaroyltransferase-1 (ACT-1) from Hordeum vulgare (Barley).